A 405-amino-acid chain; its full sequence is Probable tRNA sulfurtransferase (405 aa).

Residues 60-165 (QEVSASLKKI…PDAAYISHEE (106 aa)) enclose the THUMP domain. ATP is bound by residues 183 to 184 (ML), 208 to 209 (HF), Arg265, Gly287, and Gln296.

This sequence belongs to the ThiI family.

It is found in the cytoplasm. It catalyses the reaction [ThiI sulfur-carrier protein]-S-sulfanyl-L-cysteine + a uridine in tRNA + 2 reduced [2Fe-2S]-[ferredoxin] + ATP + H(+) = [ThiI sulfur-carrier protein]-L-cysteine + a 4-thiouridine in tRNA + 2 oxidized [2Fe-2S]-[ferredoxin] + AMP + diphosphate. The enzyme catalyses [ThiS sulfur-carrier protein]-C-terminal Gly-Gly-AMP + S-sulfanyl-L-cysteinyl-[cysteine desulfurase] + AH2 = [ThiS sulfur-carrier protein]-C-terminal-Gly-aminoethanethioate + L-cysteinyl-[cysteine desulfurase] + A + AMP + 2 H(+). Its pathway is cofactor biosynthesis; thiamine diphosphate biosynthesis. Catalyzes the ATP-dependent transfer of a sulfur to tRNA to produce 4-thiouridine in position 8 of tRNAs, which functions as a near-UV photosensor. Also catalyzes the transfer of sulfur to the sulfur carrier protein ThiS, forming ThiS-thiocarboxylate. This is a step in the synthesis of thiazole, in the thiamine biosynthesis pathway. The sulfur is donated as persulfide by IscS. The polypeptide is Probable tRNA sulfurtransferase (Streptococcus suis (strain 98HAH33)).